The following is a 331-amino-acid chain: CRISPR-associated endonuclease Cas1 (331 aa).

Mn(2+)-binding residues include glutamate 166, histidine 228, and aspartate 243.

This sequence belongs to the CRISPR-associated endonuclease Cas1 family. In terms of assembly, homodimer, forms a heterotetramer with a Cas2 homodimer. It depends on Mg(2+) as a cofactor. Mn(2+) is required as a cofactor.

CRISPR (clustered regularly interspaced short palindromic repeat), is an adaptive immune system that provides protection against mobile genetic elements (viruses, transposable elements and conjugative plasmids). CRISPR clusters contain spacers, sequences complementary to antecedent mobile elements, and target invading nucleic acids. CRISPR clusters are transcribed and processed into CRISPR RNA (crRNA). Acts as a dsDNA endonuclease. Involved in the integration of spacer DNA into the CRISPR cassette. The sequence is that of CRISPR-associated endonuclease Cas1 from Hyperthermus butylicus (strain DSM 5456 / JCM 9403 / PLM1-5).